The following is an 87-amino-acid chain: Small ribosomal subunit protein bS20 (87 aa).

The protein belongs to the bacterial ribosomal protein bS20 family.

Functionally, binds directly to 16S ribosomal RNA. This is Small ribosomal subunit protein bS20 from Corynebacterium diphtheriae (strain ATCC 700971 / NCTC 13129 / Biotype gravis).